A 357-amino-acid polypeptide reads, in one-letter code: Dehydrogenase FUB6 (357 aa).

This sequence belongs to the zinc-containing alcohol dehydrogenase family. Quinone oxidoreductase subfamily.

It functions in the pathway mycotoxin biosynthesis. Dehydrogenase; part of the gene cluster that mediates the biosynthesis of fusaric acid, a mycotoxin with low to moderate toxicity to animals and humans, but with high phytotoxic properties. L-aspartate is suggested as fusaric acid amino acid precursor that is activated and further processed to O-acetyl-L-homoserine by cluster enzymes aspartate kinase FUB3 and homoserine O-acetyltransferase FUB5, as well as enzymes of the primary metabolism. The polyketide synthase (PKS) FUB1 generates the triketide trans-2-hexenal which is presumptively released by the hydrolase FUB4 and linked to the NRPS-bound amino acid precursor by NAD(P)-dependent dehydrogenase FUB6. FUB1, FUB4, and the non-canonical NRPS Fub8 may form an enzyme complex. Further processing of the NRPS-bound intermediate might be carried out by FUB6 and the O-acetylhomoserine FUB7, enabling a spontaneous electrocyclization to close the carbon backbone of fusaric acid. Dihydrofusaric acid is likely to be released via reduction by the thioester reductase (TR) domain of FUB8 whereupon the final oxidation to fusaric acid may (also) be performed by the FMN-dependent dehydrogenase FUB9. The polypeptide is Dehydrogenase FUB6 (Gibberella moniliformis (strain M3125 / FGSC 7600) (Maize ear and stalk rot fungus)).